We begin with the raw amino-acid sequence, 132 residues long: ATP synthase epsilon chain (132 aa).

It belongs to the ATPase epsilon chain family. As to quaternary structure, F-type ATPases have 2 components, CF(1) - the catalytic core - and CF(0) - the membrane proton channel. CF(1) has five subunits: alpha(3), beta(3), gamma(1), delta(1), epsilon(1). CF(0) has three main subunits: a, b and c.

Its subcellular location is the cell inner membrane. Produces ATP from ADP in the presence of a proton gradient across the membrane. This Anaeromyxobacter dehalogenans (strain 2CP-C) protein is ATP synthase epsilon chain.